The primary structure comprises 565 residues: Proline--tRNA ligase (565 aa).

It belongs to the class-II aminoacyl-tRNA synthetase family. ProS type 1 subfamily. Homodimer.

It is found in the cytoplasm. The enzyme catalyses tRNA(Pro) + L-proline + ATP = L-prolyl-tRNA(Pro) + AMP + diphosphate. Catalyzes the attachment of proline to tRNA(Pro) in a two-step reaction: proline is first activated by ATP to form Pro-AMP and then transferred to the acceptor end of tRNA(Pro). As ProRS can inadvertently accommodate and process non-cognate amino acids such as alanine and cysteine, to avoid such errors it has two additional distinct editing activities against alanine. One activity is designated as 'pretransfer' editing and involves the tRNA(Pro)-independent hydrolysis of activated Ala-AMP. The other activity is designated 'posttransfer' editing and involves deacylation of mischarged Ala-tRNA(Pro). The misacylated Cys-tRNA(Pro) is not edited by ProRS. The polypeptide is Proline--tRNA ligase (Lactobacillus acidophilus (strain ATCC 700396 / NCK56 / N2 / NCFM)).